The primary structure comprises 116 residues: Beta-2-microglobulin (116 aa).

The N-terminal stretch at 1–19 (MRAIITFALFCVLYITVQA) is a signal peptide. The Ig-like C1-type domain occupies 24–111 (PKVQVYSHFP…RHMSNTNAYS (88 aa)). C44 and C99 are disulfide-bonded.

The protein belongs to the beta-2-microglobulin family. As to quaternary structure, heterodimer of an alpha chain and a beta chain. Beta-2-microglobulin is the beta-chain of major histocompatibility complex class I molecules.

Its subcellular location is the secreted. Component of the class I major histocompatibility complex (MHC). Involved in the presentation of peptide antigens to the immune system. In Labeobarbus intermedius (Lake tana barbels), this protein is Beta-2-microglobulin (b2m).